Reading from the N-terminus, the 277-residue chain is NADPH-dependent 7-cyano-7-deazaguanine reductase (277 aa).

86–88 contributes to the substrate binding site; it reads IES. 88-89 contacts NADPH; sequence SK. The active-site Thioimide intermediate is the C185. D192 acts as the Proton donor in catalysis. 224 to 225 provides a ligand contact to substrate; the sequence is HE. Residue 253–254 participates in NADPH binding; sequence RG.

It belongs to the GTP cyclohydrolase I family. QueF type 2 subfamily. As to quaternary structure, homodimer.

The protein localises to the cytoplasm. It catalyses the reaction 7-aminomethyl-7-carbaguanine + 2 NADP(+) = 7-cyano-7-deazaguanine + 2 NADPH + 3 H(+). It functions in the pathway tRNA modification; tRNA-queuosine biosynthesis. Its function is as follows. Catalyzes the NADPH-dependent reduction of 7-cyano-7-deazaguanine (preQ0) to 7-aminomethyl-7-deazaguanine (preQ1). In Hydrogenovibrio crunogenus (strain DSM 25203 / XCL-2) (Thiomicrospira crunogena), this protein is NADPH-dependent 7-cyano-7-deazaguanine reductase.